Consider the following 346-residue polypeptide: Alkylated DNA repair protein ALKBH8 homolog (346 aa).

A disordered region spans residues 1 to 21; it reads MVQPRFVRPTQSSPSSISGEP. The segment covering 12-21 has biased composition (low complexity); the sequence is SSPSSISGEP. One can recognise an RRM domain in the interval 24-102; that stretch reads SNLYVANCGP…RSLHIRYSVL (79 aa). The Fe2OG dioxygenase domain occupies 208–328; that stretch reads NLDQLTVNEY…RVSFTLRKVR (121 aa). 3 residues coordinate Fe cation: His-226, Asp-228, and His-298. 2-oxoglutarate contacts are provided by Arg-319 and Arg-325.

This sequence belongs to the alkB family. It depends on Fe(2+) as a cofactor.

Functionally, binds tRNA and catalyzes the iron and alpha-ketoglutarate dependent hydroxylation of 5-methylcarboxymethyl uridine at the wobble position of the anticodon loop in tRNA via its dioxygenase domain, giving rise to 5-(S)-methoxycarbonylhydroxymethyluridine. This chain is Alkylated DNA repair protein ALKBH8 homolog, found in Arabidopsis thaliana (Mouse-ear cress).